The chain runs to 254 residues: MSLKKSPFFELRSGSVDTLLFTVKTTDLDALRTELVKRFEATPEFFADDVVAIDVRRLADGERVALADIRQMLNDVRMRPVGVVALATQGWAGEAGLPLLEARDRRVSAAKPADEAEPAPVVAEAVAAAEPAPEPAPTQISASGQTLVIDRPLRSGQQIYAKGDLVVLAPVSHGAEIIAEGNIHIYAPLRGRALAGVHGNHDARIFCTCLEPELISIAGIYRTTENPLPADILGKAVQIRLEEEKLMIEPLRLT.

Belongs to the MinC family. Interacts with MinD and FtsZ.

In terms of biological role, cell division inhibitor that blocks the formation of polar Z ring septums. Rapidly oscillates between the poles of the cell to destabilize FtsZ filaments that have formed before they mature into polar Z rings. Prevents FtsZ polymerization. In Burkholderia ambifaria (strain ATCC BAA-244 / DSM 16087 / CCUG 44356 / LMG 19182 / AMMD) (Burkholderia cepacia (strain AMMD)), this protein is Probable septum site-determining protein MinC.